A 1443-amino-acid chain; its full sequence is DNA polymerase III PolC-type (1443 aa).

In terms of domain architecture, Exonuclease spans 408-567 (FVIFDIETTG…YDTQALKKVF (160 aa)).

The protein belongs to the DNA polymerase type-C family. PolC subfamily.

It localises to the cytoplasm. The enzyme catalyses DNA(n) + a 2'-deoxyribonucleoside 5'-triphosphate = DNA(n+1) + diphosphate. Functionally, required for replicative DNA synthesis. This DNA polymerase also exhibits 3' to 5' exonuclease activity. This is DNA polymerase III PolC-type from Mycoplasma pneumoniae (strain ATCC 29342 / M129 / Subtype 1) (Mycoplasmoides pneumoniae).